The following is a 637-amino-acid chain: Biosynthetic arginine decarboxylase (637 aa).

Lysine 101 carries the post-translational modification N6-(pyridoxal phosphate)lysine. 286–296 contributes to the substrate binding site; the sequence is FDVGGGLAVDY.

It belongs to the Orn/Lys/Arg decarboxylase class-II family. SpeA subfamily. Mg(2+) is required as a cofactor. It depends on pyridoxal 5'-phosphate as a cofactor.

The enzyme catalyses L-arginine + H(+) = agmatine + CO2. It participates in amine and polyamine biosynthesis; agmatine biosynthesis; agmatine from L-arginine: step 1/1. In terms of biological role, catalyzes the biosynthesis of agmatine from arginine. The sequence is that of Biosynthetic arginine decarboxylase from Shewanella piezotolerans (strain WP3 / JCM 13877).